A 433-amino-acid chain; its full sequence is Trigger factor (433 aa).

Residues 161-246 (GKRVSIDFVG…VNKVEARELP (86 aa)) enclose the PPIase FKBP-type domain.

It belongs to the FKBP-type PPIase family. Tig subfamily.

It is found in the cytoplasm. It carries out the reaction [protein]-peptidylproline (omega=180) = [protein]-peptidylproline (omega=0). Functionally, involved in protein export. Acts as a chaperone by maintaining the newly synthesized protein in an open conformation. Functions as a peptidyl-prolyl cis-trans isomerase. This is Trigger factor from Vibrio cholerae serotype O1 (strain ATCC 39541 / Classical Ogawa 395 / O395).